The sequence spans 177 residues: Small ribosomal subunit protein uS4 (177 aa).

The region spanning 104–168 (RRLQTLVFRK…SPMASESHPE (65 aa)) is the S4 RNA-binding domain. The segment at 157–177 (PNSPMASESHPERTDSVKDAE) is disordered. The span at 165-177 (SHPERTDSVKDAE) shows a compositional bias: basic and acidic residues.

It belongs to the universal ribosomal protein uS4 family. In terms of assembly, part of the 30S ribosomal subunit. Contacts protein S5. The interaction surface between S4 and S5 is involved in control of translational fidelity.

In terms of biological role, one of the primary rRNA binding proteins, it binds directly to 16S rRNA where it nucleates assembly of the body of the 30S subunit. With S5 and S12 plays an important role in translational accuracy. This chain is Small ribosomal subunit protein uS4, found in Methanococcus aeolicus (strain ATCC BAA-1280 / DSM 17508 / OCM 812 / Nankai-3).